The sequence spans 184 residues: UPF0397 protein SA2477 (184 aa).

Helical transmembrane passes span 11 to 31, 44 to 64, 77 to 97, 111 to 131, and 148 to 168; these read VVAI…VVIP, AFLA…TGLV, AWWS…WIGL, MIYF…LIAP, and QGVI…TILL.

The protein belongs to the UPF0397 family.

It is found in the cell membrane. The chain is UPF0397 protein SA2477 from Staphylococcus aureus (strain N315).